Here is a 90-residue protein sequence, read N- to C-terminus: DNA-directed RNA polymerase subunit omega (90 aa).

The protein belongs to the RNA polymerase subunit omega family. In terms of assembly, the RNAP catalytic core consists of 2 alpha, 1 beta, 1 beta' and 1 omega subunit. When a sigma factor is associated with the core the holoenzyme is formed, which can initiate transcription.

It carries out the reaction RNA(n) + a ribonucleoside 5'-triphosphate = RNA(n+1) + diphosphate. Functionally, promotes RNA polymerase assembly. Latches the N- and C-terminal regions of the beta' subunit thereby facilitating its interaction with the beta and alpha subunits. This is DNA-directed RNA polymerase subunit omega from Beutenbergia cavernae (strain ATCC BAA-8 / DSM 12333 / CCUG 43141 / JCM 11478 / NBRC 16432 / NCIMB 13614 / HKI 0122).